The sequence spans 114 residues: Evasin-1 (114 aa).

Residues 1 to 20 form the signal peptide; that stretch reads MTFKACIAIITALCAMQVIC. Disulfide bonds link Cys-32-Cys-53, Cys-49-Cys-90, Cys-66-Cys-95, and Cys-85-Cys-104. N-linked (GlcNAc...) asparagine glycosylation is found at Asn-39, Asn-54, and Asn-62.

This sequence belongs to the evasin C8 family. In terms of assembly, monomer.

Its subcellular location is the secreted. Salivary chemokine-binding protein which shows chemokine neutralizing activity and binds to host chemokines CCL3, CCL4 and CCL18. Binds to CCL3 with 1:1 stoichiometry. In Rhipicephalus sanguineus (Brown dog tick), this protein is Evasin-1.